We begin with the raw amino-acid sequence, 155 residues long: uncharacterized protein (155 aa).

This is an uncharacterized protein from Acanthamoeba polyphaga (Amoeba).